The sequence spans 253 residues: Retinoic acid early-inducible protein 1-beta (253 aa).

The first 28 residues, 1–28 (MAKAAVTKRHHFMIQKLLILLSYGYTNG), serve as a signal peptide directing secretion. A disulfide bridge connects residues cysteine 37 and cysteine 56. N-linked (GlcNAc...) asparagine glycosylation is found at asparagine 38, asparagine 70, asparagine 83, asparagine 143, and asparagine 156. Cysteine 90 and cysteine 190 form a disulfide bridge. The interval 198–230 (LKQSKEKPRSTSRSPSITQLTSTSPLPPPSHST) is disordered. The segment covering 211-221 (SPSITQLTSTS) has biased composition (low complexity). Serine 229 is lipidated: GPI-anchor amidated serine. A propeptide spans 230–253 (TSKKGFISVGLIFISLLFAFAFAM) (removed in mature form).

The protein belongs to the NKG2D ligand family. Post-translationally, glycosylated. As to expression, expressed predominantly in embryonic brain.

The protein resides in the cell membrane. Acts as a ligand for KLRK1. The protein is Retinoic acid early-inducible protein 1-beta (Raet1b) of Mus musculus (Mouse).